A 219-amino-acid polypeptide reads, in one-letter code: Ion-translocating oxidoreductase complex subunit G (219 aa).

The chain crosses the membrane as a helical span at residues 25–45; sequence GLLLGLFSLVSALMLALASDA. Thr-187 carries the FMN phosphoryl threonine modification.

It belongs to the RnfG family. As to quaternary structure, the complex is composed of six subunits: RnfA, RnfB, RnfC, RnfD, RnfE and RnfG. FMN is required as a cofactor.

The protein resides in the cellular chromatophore membrane. Part of a membrane-bound complex that couples electron transfer with translocation of ions across the membrane. In Cereibacter sphaeroides (strain ATCC 17023 / DSM 158 / JCM 6121 / CCUG 31486 / LMG 2827 / NBRC 12203 / NCIMB 8253 / ATH 2.4.1.) (Rhodobacter sphaeroides), this protein is Ion-translocating oxidoreductase complex subunit G.